We begin with the raw amino-acid sequence, 316 residues long: Secondary metabolism regulator LAE1 (316 aa).

This sequence belongs to the methyltransferase superfamily. LaeA methyltransferase family. In terms of assembly, component of the heterotrimeric velvet complex composed of LAE1, VEL1 and VEL2; VEL1 acting as a bridging protein between LAE1 and VEL2. Interacts with VEL1.

It localises to the nucleus. The enzyme catalyses L-methionyl-[protein] + S-adenosyl-L-methionine = S-methyl-L-methionyl-[protein] + S-adenosyl-L-homocysteine. Its function is as follows. Methyltransferase that performs automethylation. No other methyl-accepting substrate has been identified yet. Component of the velvet transcription factor complex that acts as a global regulator for secondary metabolite gene expression. Controls the expression of the gibberellins gene clusters, but does not affect bikaverin production. Controls the expression of the fusaric acid gene cluster. Acts as a virulence factors during infection, most likely through activation of gibberellins biosynthesis. This is Secondary metabolism regulator LAE1 from Gibberella fujikuroi (strain CBS 195.34 / IMI 58289 / NRRL A-6831) (Bakanae and foot rot disease fungus).